The primary structure comprises 233 residues: MARKVVVVDDEKPIADILEFNLKKEGYDVYCAYDGNDAVDLIYEEEPDIVLLDIMLPGRDGMEVCREVRKKYEMPIIMLTAKDSEIDKVLGLELGADDYVTKPFSTRELIARVKANLRRHYSQPAQEVSGATNEITIKDIVIYPDAYSIKKRGEDIELTHREFELFHYLSKHMGQVMTREHLLQTVWGYDYFGDVRTVDVTIRRLREKIEDDPSHPEYIVTRRGVGYFLQQHD.

Residues lysine 4–leucine 117 form the Response regulatory domain. At aspartate 53 the chain carries 4-aspartylphosphate. A DNA-binding region (ompR/PhoB-type) is located at residues threonine 132 to glutamine 231.

Phosphorylated by WalK.

The protein localises to the cytoplasm. Its function is as follows. Member of the two-component regulatory system WalK/WalR. The sequence is that of Transcriptional regulatory protein WalR (walR) from Staphylococcus epidermidis (strain ATCC 12228 / FDA PCI 1200).